The chain runs to 427 residues: Adenylosuccinate synthetase (427 aa).

Residues 12–18 (GDEGKGK) and 40–42 (GHT) contribute to the GTP site. Residue D13 is the Proton acceptor of the active site. The Mg(2+) site is built by D13 and G40. Residues 13-16 (DEGK), 38-41 (NAGH), T128, R142, Q223, T238, and R302 contribute to the IMP site. H41 (proton donor) is an active-site residue. 298 to 304 (TTTGRAR) is a binding site for substrate. GTP contacts are provided by residues R304, 330–332 (KLD), and 412–414 (AVG).

It belongs to the adenylosuccinate synthetase family. As to quaternary structure, homodimer. It depends on Mg(2+) as a cofactor.

The protein resides in the cytoplasm. The enzyme catalyses IMP + L-aspartate + GTP = N(6)-(1,2-dicarboxyethyl)-AMP + GDP + phosphate + 2 H(+). It participates in purine metabolism; AMP biosynthesis via de novo pathway; AMP from IMP: step 1/2. Functionally, plays an important role in the de novo pathway of purine nucleotide biosynthesis. Catalyzes the first committed step in the biosynthesis of AMP from IMP. The polypeptide is Adenylosuccinate synthetase (Desulfitobacterium hafniense (strain Y51)).